The primary structure comprises 444 residues: Phosphoglucosamine mutase (444 aa).

S102 functions as the Phosphoserine intermediate in the catalytic mechanism. Residues S102, D241, D243, and D245 each coordinate Mg(2+). The residue at position 102 (S102) is a Phosphoserine.

This sequence belongs to the phosphohexose mutase family. Requires Mg(2+) as cofactor. Activated by phosphorylation.

The catalysed reaction is alpha-D-glucosamine 1-phosphate = D-glucosamine 6-phosphate. In terms of biological role, catalyzes the conversion of glucosamine-6-phosphate to glucosamine-1-phosphate. This chain is Phosphoglucosamine mutase, found in Leptothrix cholodnii (strain ATCC 51168 / LMG 8142 / SP-6) (Leptothrix discophora (strain SP-6)).